The primary structure comprises 119 residues: Hydrogenase maturation factor HypA (119 aa).

A Ni(2+)-binding site is contributed by H2. Residues C73, C76, C89, and C92 each contribute to the Zn(2+) site.

Belongs to the HypA/HybF family.

In terms of biological role, involved in the maturation of [NiFe] hydrogenases. Required for nickel insertion into the metal center of the hydrogenase. The protein is Hydrogenase maturation factor HypA of Dehalococcoides mccartyi (strain ATCC BAA-2100 / JCM 16839 / KCTC 5957 / BAV1).